We begin with the raw amino-acid sequence, 147 residues long: Ribosome-binding factor A (147 aa).

A disordered region spans residues 127-147 (AAEARHAGEPDPYKTDRDDAE).

This sequence belongs to the RbfA family. As to quaternary structure, monomer. Binds 30S ribosomal subunits, but not 50S ribosomal subunits or 70S ribosomes.

It is found in the cytoplasm. In terms of biological role, one of several proteins that assist in the late maturation steps of the functional core of the 30S ribosomal subunit. Associates with free 30S ribosomal subunits (but not with 30S subunits that are part of 70S ribosomes or polysomes). Required for efficient processing of 16S rRNA. May interact with the 5'-terminal helix region of 16S rRNA. In Nocardia farcinica (strain IFM 10152), this protein is Ribosome-binding factor A.